Consider the following 316-residue polypeptide: Protoheme IX farnesyltransferase (316 aa).

9 consecutive transmembrane segments (helical) span residues 29–49 (IIPL…EGRV), 54–74 (LLIT…LNCI), 102–122 (LIFA…FVNV), 123–143 (LSGC…THWL), 151–171 (IVIG…AVTG), 179–199 (VLFA…ALMI), 224–241 (IWYY…LVYP), 245–267 (LGIL…AWQL), and 283–303 (FSIF…LPVT).

Belongs to the UbiA prenyltransferase family. Protoheme IX farnesyltransferase subfamily.

It is found in the cell inner membrane. It catalyses the reaction heme b + (2E,6E)-farnesyl diphosphate + H2O = Fe(II)-heme o + diphosphate. It functions in the pathway porphyrin-containing compound metabolism; heme O biosynthesis; heme O from protoheme: step 1/1. In terms of biological role, converts heme B (protoheme IX) to heme O by substitution of the vinyl group on carbon 2 of heme B porphyrin ring with a hydroxyethyl farnesyl side group. This is Protoheme IX farnesyltransferase from Synechocystis sp. (strain ATCC 27184 / PCC 6803 / Kazusa).